Consider the following 520-residue polypeptide: Cholesterol side-chain cleavage enzyme, mitochondrial (520 aa).

Residues methionine 1 to glycine 39 constitute a mitochondrion transit peptide. The tract at residues tryptophan 27 to tyrosine 48 is disordered. Heme is bound at residue cysteine 461.

It belongs to the cytochrome P450 family. In terms of assembly, interacts with FDX1/adrenodoxin. Heme is required as a cofactor.

It is found in the mitochondrion inner membrane. The enzyme catalyses 6 reduced [adrenodoxin] + cholesterol + 3 O2 + 6 H(+) = 4-methylpentanal + pregnenolone + 6 oxidized [adrenodoxin] + 4 H2O. It catalyses the reaction 2 reduced [adrenodoxin] + cholesterol + O2 + 2 H(+) = (22R)-hydroxycholesterol + 2 oxidized [adrenodoxin] + H2O. It carries out the reaction (22R)-hydroxycholesterol + 2 reduced [adrenodoxin] + O2 + 2 H(+) = (20R,22R)-20,22-dihydroxycholesterol + 2 oxidized [adrenodoxin] + H2O. The catalysed reaction is (20R,22R)-20,22-dihydroxycholesterol + 2 reduced [adrenodoxin] + O2 + 2 H(+) = 4-methylpentanal + pregnenolone + 2 oxidized [adrenodoxin] + 2 H2O. It functions in the pathway lipid metabolism; C21-steroid hormone metabolism. Its pathway is steroid metabolism; cholesterol metabolism. Functionally, a cytochrome P450 monooxygenase that catalyzes the side-chain hydroxylation and cleavage of cholesterol to pregnenolone, the precursor of most steroid hormones. Catalyzes three sequential oxidation reactions of cholesterol, namely the hydroxylation at C22 followed with the hydroxylation at C20 to yield 20R,22R-hydroxycholesterol that is further cleaved between C20 and C22 to yield the C21-steroid pregnenolone and 4-methylpentanal. Mechanistically, uses molecular oxygen inserting one oxygen atom into a substrate and reducing the second into a water molecule. Two electrons are provided by NADPH via a two-protein mitochondrial transfer system comprising flavoprotein FDXR (adrenodoxin/ferredoxin reductase) and nonheme iron-sulfur protein FDX1 or FDX2 (adrenodoxin/ferredoxin). The chain is Cholesterol side-chain cleavage enzyme, mitochondrial from Capra hircus (Goat).